The chain runs to 140 residues: Small ribosomal subunit protein uS8c (140 aa).

Belongs to the universal ribosomal protein uS8 family. As to quaternary structure, part of the 30S ribosomal subunit.

Its subcellular location is the plastid. The protein resides in the chloroplast. In terms of biological role, one of the primary rRNA binding proteins, it binds directly to 16S rRNA central domain where it helps coordinate assembly of the platform of the 30S subunit. The protein is Small ribosomal subunit protein uS8c (rps8) of Euglena gracilis.